The following is a 382-amino-acid chain: S-adenosylmethionine synthase (382 aa).

Histidine 15 is an ATP binding site. Aspartate 17 provides a ligand contact to Mg(2+). Position 43 (glutamate 43) interacts with K(+). The L-methionine site is built by glutamate 56 and glutamine 99. Residues 99-109 (QSPDINQGVDR) are flexible loop. Residues 164-166 (DAK), 230-231 (RF), aspartate 239, 245-246 (RK), alanine 262, and lysine 266 each bind ATP. Aspartate 239 provides a ligand contact to L-methionine. Lysine 270 contributes to the L-methionine binding site.

Belongs to the AdoMet synthase family. In terms of assembly, homotetramer; dimer of dimers. The cofactor is Mg(2+). It depends on K(+) as a cofactor.

The protein resides in the cytoplasm. It carries out the reaction L-methionine + ATP + H2O = S-adenosyl-L-methionine + phosphate + diphosphate. The protein operates within amino-acid biosynthesis; S-adenosyl-L-methionine biosynthesis; S-adenosyl-L-methionine from L-methionine: step 1/1. Functionally, catalyzes the formation of S-adenosylmethionine (AdoMet) from methionine and ATP. The overall synthetic reaction is composed of two sequential steps, AdoMet formation and the subsequent tripolyphosphate hydrolysis which occurs prior to release of AdoMet from the enzyme. The protein is S-adenosylmethionine synthase of Psychromonas ingrahamii (strain DSM 17664 / CCUG 51855 / 37).